Here is a 383-residue protein sequence, read N- to C-terminus: Na(+)/H(+) antiporter (383 aa).

12 helical membrane passes run 1 to 21 (MEFIGILCLILVATTIGSHIS), 24 to 44 (FGIPAVIGQLLVGVLLGQAGL), 51 to 71 (ILVHDFSEIGVILLMFLAGLE), 83 to 103 (PGMFVALLGILFPVFFGWLTG), 112 to 132 (EAIFFGIILAATSVSISVEVL), 145 to 165 (TILGASVVDDILVVLVLSFSL), 186 to 206 (LFYFLFIFLLVKWIAPFLMSL), 216 to 236 (IIIMSLVICLGMSYLADLIGL), 262 to 282 (VEALGYAVFIPVFFVSVGLEV), 291 to 311 (ILFILILTLVAILTKLIGGYI), 323 to 343 (ALMVGAGMISRGEMALIILQI), and 353 to 373 (HYYSPLVIVVLLSTLISPLIL).

It belongs to the monovalent cation:proton antiporter 2 (CPA2) transporter (TC 2.A.37) family.

It localises to the cell membrane. Its function is as follows. Na(+)/H(+) antiporter that extrudes sodium in exchange for external protons. Can also transport lithium. The sequence is that of Na(+)/H(+) antiporter (napA) from Enterococcus hirae.